Consider the following 87-residue polypeptide: Cell division topological specificity factor (87 aa).

Belongs to the MinE family.

Functionally, prevents the cell division inhibition by proteins MinC and MinD at internal division sites while permitting inhibition at polar sites. This ensures cell division at the proper site by restricting the formation of a division septum at the midpoint of the long axis of the cell. The protein is Cell division topological specificity factor of Delftia acidovorans (strain DSM 14801 / SPH-1).